A 185-amino-acid chain; its full sequence is Elongation factor P (185 aa).

The protein belongs to the elongation factor P family.

The protein resides in the cytoplasm. It participates in protein biosynthesis; polypeptide chain elongation. Functionally, involved in peptide bond synthesis. Stimulates efficient translation and peptide-bond synthesis on native or reconstituted 70S ribosomes in vitro. Probably functions indirectly by altering the affinity of the ribosome for aminoacyl-tRNA, thus increasing their reactivity as acceptors for peptidyl transferase. The sequence is that of Elongation factor P from Nitrosomonas europaea (strain ATCC 19718 / CIP 103999 / KCTC 2705 / NBRC 14298).